A 369-amino-acid polypeptide reads, in one-letter code: Phenylalanine--tRNA ligase alpha subunit (369 aa).

Glu269 contributes to the Mg(2+) binding site.

The protein belongs to the class-II aminoacyl-tRNA synthetase family. Phe-tRNA synthetase alpha subunit type 1 subfamily. Tetramer of two alpha and two beta subunits. Requires Mg(2+) as cofactor.

It localises to the cytoplasm. The enzyme catalyses tRNA(Phe) + L-phenylalanine + ATP = L-phenylalanyl-tRNA(Phe) + AMP + diphosphate + H(+). The chain is Phenylalanine--tRNA ligase alpha subunit from Brucella ovis (strain ATCC 25840 / 63/290 / NCTC 10512).